The sequence spans 247 residues: 3(1)-hydroxy-L-isoleucine 4-dioxygenase (247 aa).

Fe cation is bound by residues His-160, Asp-162, and His-213.

This sequence belongs to the iron/ascorbate-dependent oxidoreductase family. It depends on L-ascorbate as a cofactor. Fe(2+) serves as cofactor.

The enzyme catalyses 3(1)-hydroxy-L-isoleucine + 2-oxoglutarate + O2 = (4S)-3(1),4-dihydroxy-L-isoleucine + succinate + CO2. Catalyzes the hydroxylation of L-4'-hydroxyisoleucine (4'-HIL) at the C-4 position to form L-4,4'-dihydroxyisoleucine (4,4'-DIHIL). Together with HilA, catalyzes the two step conversion of L-isoleucine into L-4,4'-dihydroxyisoleucine. In vitro, in the absence of HilA, can also catalyze the oxidation of L-methionine and the C-4-hydroxylation of L-leucine and L-isoleucine. This Pantoea ananatis (strain AJ13355) protein is 3(1)-hydroxy-L-isoleucine 4-dioxygenase.